A 404-amino-acid polypeptide reads, in one-letter code: Cysteine desulfurase IscS (404 aa).

Residues 75–76, Asn155, Gln183, and 203–205 contribute to the pyridoxal 5'-phosphate site; these read AT and SAH. An N6-(pyridoxal phosphate)lysine modification is found at Lys206. Residue Thr243 coordinates pyridoxal 5'-phosphate. The active-site Cysteine persulfide intermediate is Cys328. A [2Fe-2S] cluster-binding site is contributed by Cys328.

Belongs to the class-V pyridoxal-phosphate-dependent aminotransferase family. NifS/IscS subfamily. In terms of assembly, homodimer. Forms a heterotetramer with IscU, interacts with other sulfur acceptors. Pyridoxal 5'-phosphate is required as a cofactor.

It is found in the cytoplasm. The enzyme catalyses (sulfur carrier)-H + L-cysteine = (sulfur carrier)-SH + L-alanine. It functions in the pathway cofactor biosynthesis; iron-sulfur cluster biosynthesis. Master enzyme that delivers sulfur to a number of partners involved in Fe-S cluster assembly, tRNA modification or cofactor biosynthesis. Catalyzes the removal of elemental sulfur atoms from cysteine to produce alanine. Functions as a sulfur delivery protein for Fe-S cluster synthesis onto IscU, an Fe-S scaffold assembly protein, as well as other S acceptor proteins. The chain is Cysteine desulfurase IscS from Vibrio vulnificus (strain CMCP6).